The sequence spans 197 residues: LexA repressor (197 aa).

Residues 28-47 constitute a DNA-binding region (H-T-H motif); it reads VREIARRFRITPRGALLHLI. Residues serine 119 and lysine 156 each act as for autocatalytic cleavage activity in the active site.

The protein belongs to the peptidase S24 family. Homodimer.

It catalyses the reaction Hydrolysis of Ala-|-Gly bond in repressor LexA.. Functionally, represses a number of genes involved in the response to DNA damage (SOS response), including recA and lexA. In the presence of single-stranded DNA, RecA interacts with LexA causing an autocatalytic cleavage which disrupts the DNA-binding part of LexA, leading to derepression of the SOS regulon and eventually DNA repair. The sequence is that of LexA repressor from Thermotoga maritima (strain ATCC 43589 / DSM 3109 / JCM 10099 / NBRC 100826 / MSB8).